We begin with the raw amino-acid sequence, 34 residues long: Conotoxin S4.3 (34 aa).

At glutamine 1 the chain carries Pyrrolidone carboxylic acid. Residue glutamate 3 is modified to 4-carboxyglutamate. Serine 7 carries O-linked (HexNAc...) serine glycosylation. O-linked (HexNAc...) threonine glycosylation occurs at threonine 9. 4-hydroxyproline occurs at positions 17, 22, 31, and 32.

This sequence belongs to the conotoxin A superfamily. Contains 3 disulfide bonds. As to expression, expressed by the venom duct.

Its subcellular location is the secreted. Probable neurotoxin with ion channel inhibitor activity. The polypeptide is Conotoxin S4.3 (Conus striatus (Striated cone)).